Here is a 152-residue protein sequence, read N- to C-terminus: Arginine repressor (152 aa).

The protein belongs to the ArgR family.

It is found in the cytoplasm. It participates in amino-acid biosynthesis; L-arginine biosynthesis [regulation]. Regulates arginine biosynthesis genes. The sequence is that of Arginine repressor from Caldicellulosiruptor bescii (strain ATCC BAA-1888 / DSM 6725 / KCTC 15123 / Z-1320) (Anaerocellum thermophilum).